The sequence spans 303 residues: Taste receptor type 2 member 2 (303 aa).

The Extracellular portion of the chain corresponds to 1 to 10; sequence MALSFSAILH. A helical membrane pass occupies residues 11–31; sequence IIMMSAEFFTGITVNGFLIIV. At 32-56 the chain is on the cytoplasmic side; that stretch reads NCNELIKHRKLMPIQILLMCIGMSR. The helical transmembrane segment at 57-77 threads the bilayer; sequence FGLQMVLMVQSFFSVFFPLLY. Residues 78–79 are Extracellular-facing; the sequence is VK. The chain crosses the membrane as a helical span at residues 80 to 100; sequence IIYGAAMMFLWMFFSSISLWF. The Cytoplasmic portion of the chain corresponds to 101–102; sequence AT. Residues 103 to 123 traverse the membrane as a helical segment; the sequence is CLSVFYCLKISGFTQSCFLWL. Residues 124 to 129 lie on the Extracellular side of the membrane; that stretch reads KFRIPK. A helical transmembrane segment spans residues 130–150; sequence LIPWLLLGSVLASVSIASVCI. Residues 151–185 are Cytoplasmic-facing; it reads EVDYAKNVEEDALRNTTLKKSKTKIKKISEVLLVN. Residues 186-206 traverse the membrane as a helical segment; it reads LALIFPLAIFVMCTSMLLISL. Topologically, residues 207–234 are extracellular; it reads YKHTHRMQHGSHGFRNANTEAHINALKT. The chain crosses the membrane as a helical span at residues 235–255; it reads VITFFCFFISYFAAFMTNMTF. Topologically, residues 256 to 277 are cytoplasmic; it reads SLPYRSHQFFMLKDIMAAYPSG.

The protein belongs to the G-protein coupled receptor T2R family.

Its subcellular location is the cell membrane. In terms of biological role, bitter taste receptor that detects natural and synthetic bitter compounds. In Homo sapiens (Human), this protein is Taste receptor type 2 member 2.